Reading from the N-terminus, the 239-residue chain is 1-(5-phosphoribosyl)-5-[(5-phosphoribosylamino)methylideneamino] imidazole-4-carboxamide isomerase (239 aa).

The Proton acceptor role is filled by Asp-8. The active-site Proton donor is the Asp-129.

It belongs to the HisA/HisF family.

It is found in the cytoplasm. The enzyme catalyses 1-(5-phospho-beta-D-ribosyl)-5-[(5-phospho-beta-D-ribosylamino)methylideneamino]imidazole-4-carboxamide = 5-[(5-phospho-1-deoxy-D-ribulos-1-ylimino)methylamino]-1-(5-phospho-beta-D-ribosyl)imidazole-4-carboxamide. The protein operates within amino-acid biosynthesis; L-histidine biosynthesis; L-histidine from 5-phospho-alpha-D-ribose 1-diphosphate: step 4/9. The sequence is that of 1-(5-phosphoribosyl)-5-[(5-phosphoribosylamino)methylideneamino] imidazole-4-carboxamide isomerase from Bacillus cereus (strain AH820).